The following is a 354-amino-acid chain: Uroporphyrinogen decarboxylase (354 aa).

Substrate is bound by residues 27 to 31, Asp77, Tyr154, Thr209, and His327; that span reads RQAGR.

Belongs to the uroporphyrinogen decarboxylase family. Homodimer.

It is found in the cytoplasm. It carries out the reaction uroporphyrinogen III + 4 H(+) = coproporphyrinogen III + 4 CO2. It functions in the pathway porphyrin-containing compound metabolism; protoporphyrin-IX biosynthesis; coproporphyrinogen-III from 5-aminolevulinate: step 4/4. Functionally, catalyzes the decarboxylation of four acetate groups of uroporphyrinogen-III to yield coproporphyrinogen-III. The protein is Uroporphyrinogen decarboxylase of Serratia proteamaculans (strain 568).